A 159-amino-acid polypeptide reads, in one-letter code: Small ribosomal subunit protein uS9 (159 aa).

It belongs to the universal ribosomal protein uS9 family.

The protein is Small ribosomal subunit protein uS9 of Rickettsia conorii (strain ATCC VR-613 / Malish 7).